The chain runs to 206 residues: Transcription factor BTF3 (206 aa).

The tract at residues 1 to 42 is disordered; it reads MRRTGAPAQADSRGRGRARGGCPGGEATLSQPPPRGGTRGQE. Arg19 is modified (omega-N-methylarginine). Ser30 is subject to Phosphoserine. Lys46 and Lys54 each carry N6-methyllysine. The region spanning 82–147 is the NAC-A/B domain; that stretch reads TADDKKLQFS…AETKQLTEML (66 aa). At Thr160 the chain carries Phosphothreonine. The disordered stretch occupies residues 170-206; it reads PKQSVDGKAPLATGEDDDDEVPDLVENFDEASKNEAN. Phosphoserine is present on Ser173. The span at 183-198 shows a compositional bias: acidic residues; the sequence is GEDDDDEVPDLVENFD.

It belongs to the NAC-beta family. As to quaternary structure, part of the nascent polypeptide-associated complex (NAC), which is a heterodimer of NACA and BTF3 (via NAC-A/B domains). NAC associates with ribosomes through the BTF3/NACB subunit. Both subunits can contact nascent polypeptide chains.

It localises to the cytoplasm. It is found in the nucleus. In terms of biological role, when associated with NACA, prevents inappropriate targeting of non-secretory polypeptides to the endoplasmic reticulum (ER). Binds to nascent polypeptide chains as they emerge from the ribosome and blocks their interaction with the signal recognition particle (SRP), which normally targets nascent secretory peptides to the ER. BTF3 is also a general transcription factor that can form a stable complex with RNA polymerase II. Required for the initiation of transcription. The sequence is that of Transcription factor BTF3 (BTF3) from Homo sapiens (Human).